A 544-amino-acid chain; its full sequence is Chaperonin GroEL (544 aa).

Residues 30 to 33, K51, 87 to 91, G415, 479 to 481, and D495 each bind ATP; these read TLGP, DGTTT, and NAA.

It belongs to the chaperonin (HSP60) family. As to quaternary structure, forms a cylinder of 14 subunits composed of two heptameric rings stacked back-to-back. Interacts with the co-chaperonin GroES.

Its subcellular location is the cytoplasm. The catalysed reaction is ATP + H2O + a folded polypeptide = ADP + phosphate + an unfolded polypeptide.. Functionally, together with its co-chaperonin GroES, plays an essential role in assisting protein folding. The GroEL-GroES system forms a nano-cage that allows encapsulation of the non-native substrate proteins and provides a physical environment optimized to promote and accelerate protein folding. The protein is Chaperonin GroEL of Acinetobacter baumannii (strain AB307-0294).